A 229-amino-acid chain; its full sequence is Wtf element wtf14 (229 aa).

Over residues 1 to 26 (MENNHHLAKDSLDELNPKRGKGEHET) the composition is skewed to basic and acidic residues. The segment at 1-27 (MENNHHLAKDSLDELNPKRGKGEHETQ) is disordered. A run of 4 helical transmembrane segments spans residues 71–91 (IPAV…YLVF), 100–120 (VLFG…LLAT), 151–171 (LYAI…LMFF), and 188–208 (VIGV…PGLF).

This sequence belongs to the WTF family.

It localises to the endoplasmic reticulum membrane. Its function is as follows. May act in meiotic drive. The polypeptide is Wtf element wtf14 (Schizosaccharomyces pombe (strain 972 / ATCC 24843) (Fission yeast)).